The following is a 106-amino-acid chain: Pyrimidine/purine nucleoside phosphorylase (106 aa).

Belongs to the nucleoside phosphorylase PpnP family.

The enzyme catalyses a purine D-ribonucleoside + phosphate = a purine nucleobase + alpha-D-ribose 1-phosphate. It carries out the reaction adenosine + phosphate = alpha-D-ribose 1-phosphate + adenine. It catalyses the reaction cytidine + phosphate = cytosine + alpha-D-ribose 1-phosphate. The catalysed reaction is guanosine + phosphate = alpha-D-ribose 1-phosphate + guanine. The enzyme catalyses inosine + phosphate = alpha-D-ribose 1-phosphate + hypoxanthine. It carries out the reaction thymidine + phosphate = 2-deoxy-alpha-D-ribose 1-phosphate + thymine. It catalyses the reaction uridine + phosphate = alpha-D-ribose 1-phosphate + uracil. The catalysed reaction is xanthosine + phosphate = alpha-D-ribose 1-phosphate + xanthine. Functionally, catalyzes the phosphorolysis of diverse nucleosides, yielding D-ribose 1-phosphate and the respective free bases. Can use uridine, adenosine, guanosine, cytidine, thymidine, inosine and xanthosine as substrates. Also catalyzes the reverse reactions. The chain is Pyrimidine/purine nucleoside phosphorylase from Paraburkholderia xenovorans (strain LB400).